Consider the following 579-residue polypeptide: UvrABC system protein C (579 aa).

The GIY-YIG domain occupies 12-89 (DATGVYIFRD…IKRYRPPYNV (78 aa)). The UVR domain occupies 193-228 (QEVIEVLEEEMKEASERLEFERAARIRDQIESIREV).

The protein belongs to the UvrC family. In terms of assembly, interacts with UvrB in an incision complex.

The protein localises to the cytoplasm. Functionally, the UvrABC repair system catalyzes the recognition and processing of DNA lesions. UvrC both incises the 5' and 3' sides of the lesion. The N-terminal half is responsible for the 3' incision and the C-terminal half is responsible for the 5' incision. In Methanothermobacter thermautotrophicus (strain ATCC 29096 / DSM 1053 / JCM 10044 / NBRC 100330 / Delta H) (Methanobacterium thermoautotrophicum), this protein is UvrABC system protein C.